The following is a 541-amino-acid chain: Tripeptidyl aminopeptidase (541 aa).

The N-terminal stretch at 1–36 is a signal peptide; the sequence is MRKSSIRRRATAFGTAGALVTATLIAGAVSAPAASA. Residues 37–39 constitute a propeptide that is removed on maturation; it reads APA. Residues 123 to 501 enclose the AB hydrolase-1 domain; it reads GALIYNPGGP…SRLITERDAG (379 aa). The active-site Nucleophile is the S249. Residue D474 is part of the active site. The active-site Proton donor is the H503.

The protein belongs to the peptidase S33 family.

It localises to the secreted. Cleaves tripeptides from the N-termini of proteins. Does not cleave mono- or dipeptides, or N-terminally blocked peptides. The sequence is that of Tripeptidyl aminopeptidase from Streptomyces coelicolor (strain ATCC BAA-471 / A3(2) / M145).